The primary structure comprises 314 residues: MTASLTTKFLDNTYENPFMNASGVHCMTTPELDELANSKAGAFITKSATTLEREGNPKPRYISVPLGSINSMGLPNEGVDYYLSHVLNRQKKYPDAPAIFFSVAGMSIDENLGLLKKIQESEFNGITELNLSCPNVPGKPQVAYDFDLTKETLEKVFAFFNKPLGIKLPPYFDFAHFDIMAKILNEFPLAYVNSINSVGNGLFIDVEKESVVVKPKNGFGGIGGEYVKPTALANVRAFYTRLRPEIKIIGTGGIKSGKDAFEHLLCGASMLQIGTELQKEGVQIFERIERELKDIMEAKGYTSIDEFRGKLNSL.

Substrate-binding positions include lysine 46, 70 to 74 (NSMGL), and asparagine 130. FMN is bound at residue 46–47 (KS). Asparagine 130 is a binding site for FMN. Catalysis depends on nucleophile residues serine 132 and cysteine 133. Residues lysine 167 and isoleucine 195 each coordinate FMN. 196-197 (NS) lines the substrate pocket. Residues glycine 224, 252–253 (GG), and 274–275 (GT) contribute to the FMN site.

This sequence belongs to the dihydroorotate dehydrogenase family. Type 1 subfamily. As to quaternary structure, homodimer. Requires FMN as cofactor.

Its subcellular location is the cytoplasm. The enzyme catalyses (S)-dihydroorotate + fumarate = orotate + succinate. The protein operates within pyrimidine metabolism; UMP biosynthesis via de novo pathway. In terms of biological role, catalyzes the conversion of dihydroorotate to orotate with fumarate as the electron acceptor. The protein is Dihydroorotate dehydrogenase (fumarate) (URA1) of Saccharomyces bayanus (Yeast).